The sequence spans 119 residues: uncharacterized protein (119 aa).

The N-terminal stretch at Met-1–Ala-26 is a signal peptide. The SH3b domain occupies Tyr-30–Tyr-104.

This sequence to B.subtilis YraJ.

This is an uncharacterized protein from Bacillus subtilis (strain 168).